The primary structure comprises 270 residues: MKCVVYGSKSPVLHQALEEVKRKFLEEKILTDFDFMIISLNYKYPYENLHRDLVKIFDISSDAYFGFHSTETIEETEIHDGLAVCFIKFENRGRLKVYWDSGISDYMSNGLLQRLVEYLEENKNNLNVFFSAWEDKNLGLFIEDLGRILGQKGFYPNLVGGVSSGRKFNGELRTFQFYKGKVIKDGFGILTFENVEFTLGISLGFKPISPIYEVRKADNYKVYEVDSRVPFKRIVENFLTGLEKKIEYLWYCPIVLVEERRGIRKGAENL.

This is an uncharacterized protein from Aquifex aeolicus (strain VF5).